Here is a 47-residue protein sequence, read N- to C-terminus: PhoP/PhoQ regulator MgrB (47 aa).

A helical membrane pass occupies residues 6-26 (WVILIIVALVCLLLWAQVFNI).

The protein belongs to the MgrB family. In terms of assembly, may form homooligomers. Probably interacts with the periplasmic domain of PhoQ.

The protein localises to the cell inner membrane. Its function is as follows. PhoP-regulated transcription is redox-sensitive, being activated when the periplasm becomes more reducing. MgrB acts between DsbA/DsbB and PhoP/PhoQ in this pathway. Represses PhoP/PhoQ signaling, possibly by binding to the periplasmic domain of PhoQ, altering its activity and that of downstream effector PhoP. In Citrobacter koseri (strain ATCC BAA-895 / CDC 4225-83 / SGSC4696), this protein is PhoP/PhoQ regulator MgrB.